The sequence spans 215 residues: Cytochrome b6 (215 aa).

The helical transmembrane segment at 32-52 (IFYCLGGITLTCFLVQVATGF) threads the bilayer. Cys35 contributes to the heme c binding site. Heme b-binding residues include His86 and His100. 3 helical membrane-spanning segments follow: residues 90–110 (ASMM…TGGF), 116–136 (LTWV…VTGY), and 186–206 (LHTF…FPMI). Heme b is bound by residues His187 and His202.

It belongs to the cytochrome b family. PetB subfamily. In terms of assembly, the 4 large subunits of the cytochrome b6-f complex are cytochrome b6, subunit IV (17 kDa polypeptide, PetD), cytochrome f and the Rieske protein, while the 4 small subunits are PetG, PetL, PetM and PetN. The complex functions as a dimer. Requires heme b as cofactor. Heme c serves as cofactor.

The protein resides in the plastid. It localises to the chloroplast thylakoid membrane. Functionally, component of the cytochrome b6-f complex, which mediates electron transfer between photosystem II (PSII) and photosystem I (PSI), cyclic electron flow around PSI, and state transitions. The protein is Cytochrome b6 of Daucus carota (Wild carrot).